The following is a 966-amino-acid chain: Probable transport protein MmpL11 (966 aa).

12 helical membrane-spanning segments follow: residues 13–33 (WLVF…AMTQ), 188–208 (IILM…IPLA), 214–234 (VVIT…SVFV), 235–255 (TSTV…FILM), 279–299 (GLAV…IYLI), 311–331 (AILA…AVLA), 373–393 (ALAA…MVLG), 527–547 (TQPL…LISI), 557–577 (VLMT…VFQW), 595–615 (VPPL…IFLL), 646–666 (AALI…PLVA), and 668–688 (IGVA…LVLV).

Belongs to the resistance-nodulation-cell division (RND) (TC 2.A.6) family. MmpL subfamily.

The protein localises to the cell membrane. The chain is Probable transport protein MmpL11 (mmpL11) from Mycobacterium bovis (strain ATCC BAA-935 / AF2122/97).